Here is a 564-residue protein sequence, read N- to C-terminus: MHSYDYLLILAFLVLLLAPAPWLGRFFYRVMEGERTWLSPVLGPVERACYLISGVDPKTEQSWKQYAWALLAFNLAGFVVLFAMLMLQGLLPLNPQQLPGMEWSLAFNTAMSFVTNTNWQAYSGEASLSYLSQMVGLTVQNFVSAATGLAVLVALCRGISRRSSHSLGNFWADMTRATLYALLPISIVLAVFLVWQGVPQNFAHYIDALTLQGADQSLPMGPAASQISIKQLGTNGGGFFGVNSAHPFENPTAWSNLFELVSILLIPAALVFTFGHYVKDMRQSRAILGCMLALLLIGGAVSLWAEYQPNPALNIAGVEQTAPLEGKETRFGTTGTVLWSVATTAASNGSVNGMHDSLNPLAGMVALVNMMVGEVIFGGVGVGLNGMVLNVLIAVFLAGLMIGRTPEYLGKKLQAQEVRLLVATLLVMPVGVLVLGAIAASLPGPAGAISNPGPHGFSQLLYAYTSATANNGSAFGGFSANTVFHNLMLSLAIFIGRFGYILPVLALAGSLAMKKTAPQGQNSFPTHGLLFVTLLTVTILLVGGLTFLPTLALGPIAEHLSLGF.

The next 10 helical transmembrane spans lie at 7–27 (LLIL…GRFF), 67–87 (AWAL…MLML), 135–155 (VGLT…LVAL), 179–199 (LYAL…QGVP), 258–278 (FELV…GHYV), 286–306 (AILG…LWAE), 382–402 (VGLN…GLMI), 420–440 (LLVA…AIAA), 487–507 (LMLS…VLAL), and 528–548 (GLLF…LTFL).

This sequence belongs to the KdpA family. In terms of assembly, the system is composed of three essential subunits: KdpA, KdpB and KdpC.

Its subcellular location is the cell inner membrane. Functionally, part of the high-affinity ATP-driven potassium transport (or Kdp) system, which catalyzes the hydrolysis of ATP coupled with the electrogenic transport of potassium into the cytoplasm. This subunit binds the periplasmic potassium ions and delivers the ions to the membrane domain of KdpB through an intramembrane tunnel. The protein is Potassium-transporting ATPase potassium-binding subunit of Pseudomonas syringae pv. tomato (strain ATCC BAA-871 / DC3000).